The sequence spans 334 residues: CRISPR-associated endonuclease Cas1 (334 aa).

Residues Glu161, His226, and Glu241 each contribute to the Mn(2+) site.

Belongs to the CRISPR-associated endonuclease Cas1 family. Homodimer, forms a heterotetramer with a Cas2 homodimer. The cofactor is Mg(2+). Mn(2+) is required as a cofactor.

Its function is as follows. CRISPR (clustered regularly interspaced short palindromic repeat), is an adaptive immune system that provides protection against mobile genetic elements (viruses, transposable elements and conjugative plasmids). CRISPR clusters contain spacers, sequences complementary to antecedent mobile elements, and target invading nucleic acids. CRISPR clusters are transcribed and processed into CRISPR RNA (crRNA). Acts as a dsDNA endonuclease. Involved in the integration of spacer DNA into the CRISPR cassette. The sequence is that of CRISPR-associated endonuclease Cas1 from Methanothermobacter thermautotrophicus (strain ATCC 29096 / DSM 1053 / JCM 10044 / NBRC 100330 / Delta H) (Methanobacterium thermoautotrophicum).